The following is a 379-amino-acid chain: MNTPRIIVAMSGGVDSSVAAWRLNSQREAIAGLFMRNWTDDGNGQCHAEEDRRDAVAVCGILGIAFHFRDFSHEYWQEVFTHFLAEYANGRTPNPDVLCNREIKFKHFLETARELGADRIATGHYARIEHYRQRWHLLRGADRSKDQSYFLHQLGQEQLAATLFPIGDLEKQQLRQLAHQTGLPTHAKKDSTGICFIGERNFREFLKQYLPAQPGEIRDPQEQRIAEHPGVFYFTLGQRQGLNIGGVRNRPPSPWYVIGKDLATNVLYVDQHRDSPFLQSRWLRSEPAHWVSGSPPAPTFTCTAQTRYRQADEPCKVTVRNDGSLDVDFTRTQWAVTPGQSLVLYDGNECLGGAVIATTDAPLERKRARNLSKTENVLQ.

Residues 9 to 16 (AMSGGVDS) and M35 contribute to the ATP site. Residues 94 to 96 (NPD) are interaction with target base in tRNA. The active-site Nucleophile is C99. An intrachain disulfide couples C99 to C195. An ATP-binding site is contributed by G123. Positions 145–147 (KDQ) are interaction with tRNA. C195 acts as the Cysteine persulfide intermediate in catalysis. The segment at 307 to 308 (RY) is interaction with tRNA.

It belongs to the MnmA/TRMU family.

It localises to the cytoplasm. It carries out the reaction S-sulfanyl-L-cysteinyl-[protein] + uridine(34) in tRNA + AH2 + ATP = 2-thiouridine(34) in tRNA + L-cysteinyl-[protein] + A + AMP + diphosphate + H(+). Catalyzes the 2-thiolation of uridine at the wobble position (U34) of tRNA, leading to the formation of s(2)U34. This chain is tRNA-specific 2-thiouridylase MnmA, found in Xylella fastidiosa (strain M23).